The primary structure comprises 171 residues: Protein BTG1 (171 aa).

Serine 159 bears the Phosphoserine mark.

The protein belongs to the BTG family. Interacts with CNOT7 and CNOT8.

In terms of biological role, anti-proliferative protein. The polypeptide is Protein BTG1 (Btg1) (Rattus norvegicus (Rat)).